The chain runs to 88 residues: Small ribosomal subunit protein bS16 (88 aa).

It belongs to the bacterial ribosomal protein bS16 family.

This chain is Small ribosomal subunit protein bS16, found in Geobacter metallireducens (strain ATCC 53774 / DSM 7210 / GS-15).